Here is a 174-residue protein sequence, read N- to C-terminus: Protein C2-DOMAIN ABA-RELATED 2 (174 aa).

M1 carries the post-translational modification N-acetylmethionine. A C2 domain is found at 1-104; it reads MENMLGLLRL…EAIRIQNQLG (104 aa). The Ca(2+) site is built by R21, D22, D27, D73, R74, D75, and D81.

This sequence belongs to the plant CAR protein family. Binds to PYR/PYL/RCAR abscisic acid intracellular receptors in an ABA-independent manner, both at the plasma membrane and in the nucleus. The cofactor is Ca(2+).

It localises to the cell membrane. The protein localises to the nucleus. In terms of biological role, stimulates the GTPase/ATPase activities of Obg-like ATPases. Mediates the transient calcium-dependent interaction of PYR/PYL/RCAR abscisic acid (ABA) receptors with the plasma membrane and thus regulates ABA sensitivity. This is Protein C2-DOMAIN ABA-RELATED 2 from Arabidopsis thaliana (Mouse-ear cress).